The primary structure comprises 417 residues: Guanine nucleotide-exchange factor SEC12 (417 aa).

Residues 1 to 388 (MGRRRGVELY…QLHLLPSRRS (388 aa)) lie on the Cytoplasmic side of the membrane. Y10 bears the 3'-nitrotyrosine mark. Residues 101-135 (KGSKAEKSGSKEQGPRQRKGAAPAEKKSGAEVHPE) form a disordered region. Composition is skewed to basic and acidic residues over residues 103-115 (SKAEKSGSKEQGP) and 124-135 (AEKKSGAEVHPE). 3 WD repeats span residues 152–191 (STEPLQKVVCFNHDNTLLATGGSDGHVRVWKVPSLEKVLE), 194–232 (AHEGEIGDLALGPDGKLVTVGWDFKASVWQKDQLVTQLQ), and 298–337 (CGHEVISCLTVSESGTFLGLGTVTGSVAIYIAFSLQRLYY). The helical transmembrane segment at 389–409 (VPVWLLLLLCVGLIIVTILLL) threads the bilayer. Over 410 to 417 (QSAFPGFL) the chain is Lumenal.

As to quaternary structure, interacts with SAR1B (GDP-bound form). Interacts with MIA2; recruits PREB to endoplasmic reticulum exit sites. Interacts with CIDEB; facilitating loading of SCAP-SREBP into COPII vesicles.

The protein localises to the endoplasmic reticulum membrane. Its subcellular location is the nucleus. Guanine nucleotide exchange factor (GEF) that regulates the assembly of the coat protein complex II/COPII in endoplasmic reticulum (ER) to Golgi vesicle-mediated transport. Selectively activates SAR1A and SAR1B by promoting the exchange of guanosine diphosphate (GDP) for guanosine triphosphate (GTP) in these small GTPases. In their activated GTP-bound state, SAR1A and SAR1B insert into the membrane of the endoplasmic reticulum where they recruit the remainder of the coat protein complex II/COPII which is responsible for both the sorting of proteins and the deformation and budding of membranes into vesicles destined to the Golgi. Its function is as follows. Was first identified based on its probable role in the regulation of pituitary gene transcription. Binds to the prolactin gene (PRL) promoter and seems to activate transcription. This Rattus norvegicus (Rat) protein is Guanine nucleotide-exchange factor SEC12.